A 249-amino-acid polypeptide reads, in one-letter code: Triosephosphate isomerase (249 aa).

2 residues coordinate substrate: Asn-12 and Lys-14. Lys-14 carries the post-translational modification N6-acetyllysine. Residue Tyr-68 is modified to 3'-nitrotyrosine. The residue at position 80 (Ser-80) is a Phosphoserine. His-96 serves as the catalytic Electrophile. At Ser-106 the chain carries Phosphoserine. Lys-142 is covalently cross-linked (Glycyl lysine isopeptide (Lys-Gly) (interchain with G-Cter in SUMO1)). Lys-149 is subject to N6-succinyllysine. Lys-156 is modified (N6-acetyllysine; alternate). Lys-156 carries the post-translational modification N6-succinyllysine; alternate. Position 159 is a phosphoserine (Ser-159). Glu-166 serves as the catalytic Proton acceptor. Phosphothreonine is present on Thr-173. Lys-194 is subject to N6-acetyllysine; alternate. N6-succinyllysine; alternate is present on Lys-194. Lys-194 is subject to N6-methyllysine; alternate. Ser-198 carries the phosphoserine modification. Tyr-209 is subject to 3'-nitrotyrosine. Residue Ser-212 is modified to Phosphoserine. At Thr-214 the chain carries Phosphothreonine. Ser-223 is modified (phosphoserine). Lys-238 is subject to N6-acetyllysine.

The protein belongs to the triosephosphate isomerase family. In terms of assembly, homodimer.

It is found in the cytoplasm. The catalysed reaction is dihydroxyacetone phosphate = methylglyoxal + phosphate. The enzyme catalyses D-glyceraldehyde 3-phosphate = dihydroxyacetone phosphate. It participates in carbohydrate degradation; glycolysis; D-glyceraldehyde 3-phosphate from glycerone phosphate: step 1/1. Its pathway is carbohydrate biosynthesis; gluconeogenesis. Functionally, triosephosphate isomerase is an extremely efficient metabolic enzyme that catalyzes the interconversion between dihydroxyacetone phosphate (DHAP) and D-glyceraldehyde-3-phosphate (G3P) in glycolysis and gluconeogenesis. It is also responsible for the non-negligible production of methylglyoxal a reactive cytotoxic side-product that modifies and can alter proteins, DNA and lipids. The polypeptide is Triosephosphate isomerase (TPI1) (Bos taurus (Bovine)).